Consider the following 492-residue polypeptide: Solute carrier family 2, facilitated glucose transporter member 1 (492 aa).

Methionine 1 carries the post-translational modification N-acetylmethionine. Over 1–11 the chain is Cytoplasmic; the sequence is MDPSSKKVTGR. A helical membrane pass occupies residues 12–33; the sequence is LMLAVGGAVLGSLQFGYNTGVI. The Extracellular portion of the chain corresponds to 34 to 66; that stretch reads NAPQKVIEEFYNQTWNHRYGEPIPSTTLTTLWS. A glycan (N-linked (GlcNAc...) asparagine) is linked at asparagine 45. The helical transmembrane segment at 67–87 threads the bilayer; sequence LSVAIFSVGGMIGSFSVGLFV. Residues 88–90 lie on the Cytoplasmic side of the membrane; the sequence is NRF. The helical transmembrane segment at 91–112 threads the bilayer; sequence GRRNSMLMMNLLAFVAAVLMGF. At 113 to 120 the chain is on the extracellular side; that stretch reads SKLGKSFE. The helical transmembrane segment at 121-144 threads the bilayer; it reads MLILGRFIIGVYCGLTTGFVPMYV. The Cytoplasmic segment spans residues 145–155; it reads GEVSPTALRGA. Residues 156–176 traverse the membrane as a helical segment; sequence LGTLHQLGIVVGILIAQVFGL. A D-glucose-binding site is contributed by glutamine 161. At 177-185 the chain is on the extracellular side; the sequence is DSIMGNADL. Residues 186–206 form a helical membrane-spanning segment; the sequence is WPLLLSVIFIPALLQCILLPF. Residues 207–271 lie on the Cytoplasmic side of the membrane; the sequence is CPESPRFLLI…LFRSPAYRQP (65 aa). Position 226 is a phosphoserine (serine 226). The chain crosses the membrane as a helical span at residues 272–293; the sequence is ILIAVVLQLSQQLSGINAVFYY. D-glucose is bound by residues 282-283 and asparagine 288; that span reads QQ. The Extracellular segment spans residues 294–306; sequence STSIFEKAGVQQP. A helical transmembrane segment spans residues 307 to 328; it reads VYATIGSGIVNTAFTVVSLFVV. Asparagine 317 is a D-glucose binding site. The Cytoplasmic portion of the chain corresponds to 329–334; it reads ERAGRR. A helical membrane pass occupies residues 335–355; the sequence is TLHLIGLAGMAGCAVLMTIAL. The Extracellular segment spans residues 356–365; sequence ALLERLPWMS. The helical transmembrane segment at 366-388 threads the bilayer; that stretch reads YLSIVAIFGFVAFFEVGPGPIPW. Residues glutamate 380 and tryptophan 388 each contribute to the D-glucose site. Topologically, residues 389–401 are cytoplasmic; the sequence is FIVAELFSQGPRP. The chain crosses the membrane as a helical span at residues 402 to 422; sequence AAIAVAGFSNWTSNFIVGMCF. The Extracellular portion of the chain corresponds to 423–429; that stretch reads QYVEQLC. A helical transmembrane segment spans residues 430-450; that stretch reads GPYVFIIFTVLLVLFFIFTYF. The Cytoplasmic portion of the chain corresponds to 451 to 492; that stretch reads KVPETKGRTFDEIASGFRQGGASQSDKTPEELFHPLGADSQV. Serine 465 carries the phosphoserine modification. Residues 468 to 492 form a disordered region; it reads RQGGASQSDKTPEELFHPLGADSQV. A Phosphothreonine modification is found at threonine 478. Serine 490 bears the Phosphoserine mark.

Belongs to the major facilitator superfamily. Sugar transporter (TC 2.A.1.1) family. Glucose transporter subfamily. As to quaternary structure, found in a complex with ADD2, DMTN and SLC2A1. Interacts (via C-terminus cytoplasmic region) with DMTN isoform 2. Interacts with SNX27; the interaction is required when endocytosed to prevent degradation in lysosomes and promote recycling to the plasma membrane. Interacts with GIPC (via PDZ domain). Interacts with STOM. Interacts with SGTA (via Gln-rich region). Interacts with isoform 1 of BSG. Interacts with SMIM43; the interaction may promote SLC2A1-mediated glucose transport to meet the energy needs of mesendoderm differentiation. In terms of processing, phosphorylation at Ser-226 by PKC promotes glucose uptake by increasing cell membrane localization. Retina (at protein level).

It localises to the cell membrane. The protein resides in the photoreceptor inner segment. The catalysed reaction is D-glucose(out) = D-glucose(in). The uptake of glucose is inhibited by cytochalasin B. Glucose uptake is increased in response to phorbol ester 12-O-tetradecanoylphorbol-13-acetate (TPA) treatment: TPA-induced glucose uptake requires phosphorylation at Ser-226. Functionally, facilitative glucose transporter, which is responsible for constitutive or basal glucose uptake. Has a very broad substrate specificity; can transport a wide range of aldoses including both pentoses and hexoses. Most important energy carrier of the brain: present at the blood-brain barrier and assures the energy-independent, facilitative transport of glucose into the brain. In association with BSG and NXNL1, promotes retinal cone survival by increasing glucose uptake into photoreceptors. Required for mesendoderm differentiation. This is Solute carrier family 2, facilitated glucose transporter member 1 from Mus musculus (Mouse).